A 585-amino-acid chain; its full sequence is Protein NRT1/ PTR FAMILY 8.3 (585 aa).

Residue glycine 2 is modified to N-acetylglycine. Residues 91-111 traverse the membrane as a helical segment; that stretch reads WQGTCYLTPLIGAVLADAYWG. A Phosphothreonine modification is found at threonine 115. Helical transmembrane passes span 116 to 136, 154 to 174, 200 to 220, 228 to 248, 351 to 371, 387 to 407, 431 to 451, 472 to 492, 511 to 531, and 556 to 576; these read IACF…SASV, PAQY…TGGI, FFNW…SLLV, WGLG…SFFF, FPIW…STMF, LPPA…VPLY, MGIG…VEII, VLWQ…YFIG, ALAL…LTLV, and FFWL…FSAA.

This sequence belongs to the major facilitator superfamily. Proton-dependent oligopeptide transporter (POT/PTR) (TC 2.A.17) family. As to expression, highly expressed in young leaves, roots and germinating seeds, intermediately in stems, flowers and mature leaves and at low level in siliques.

It localises to the vacuole membrane. Inhibited by leucyl-ethionine. Peptide transporter. Mediates the transport of di- and tripeptides. High affinity, low capacity transporter. Can also transport histidine. The chain is Protein NRT1/ PTR FAMILY 8.3 (NPF8.3) from Arabidopsis thaliana (Mouse-ear cress).